A 197-amino-acid chain; its full sequence is Dephospho-CoA kinase (197 aa).

Positions 3–197 (VYGLTGGIGS…QSLLHTHQNT (195 aa)) constitute a DPCK domain. Position 11–16 (11–16 (GSGKTT)) interacts with ATP.

It belongs to the CoaE family.

Its subcellular location is the cytoplasm. It carries out the reaction 3'-dephospho-CoA + ATP = ADP + CoA + H(+). The protein operates within cofactor biosynthesis; coenzyme A biosynthesis; CoA from (R)-pantothenate: step 5/5. Catalyzes the phosphorylation of the 3'-hydroxyl group of dephosphocoenzyme A to form coenzyme A. This Hydrogenovibrio crunogenus (strain DSM 25203 / XCL-2) (Thiomicrospira crunogena) protein is Dephospho-CoA kinase.